The primary structure comprises 302 residues: MGKKELKRGLVVDREAQMIGVYLFEDGKTYRGIPRGKVLKKTKINAGDYVWGEVVDPNTFAIEEVEERKNLLIRPKVANVDRVIIVETLKMPEFNNYLLDNMLVVYEYFKVEPVIVFNKIDLLNEEEKKELERMDSIYRDAGYDVLKVSAKTGEGIDELVDYLEGFICILAGPSGVGKSSILSRLTGEELRTQEVSEKTERGRHTTTGVRLIPFGKGSFVGDTPGFSKVEATMFVKPREVRNYFREFLRYQCKYPDCTHTNEPGCAVKEAVKNGEISCERYKSYLKIIKVYLEEIKELCRED.

Residues 69–229 form the CP-type G domain; sequence KNLLIRPKVA…VGDTPGFSKV (161 aa). GTP contacts are provided by residues 118–121 and 172–180; these read NKID and GPSGVGKSS. Positions 252, 257, 259, and 265 each coordinate Zn(2+).

The protein belongs to the TRAFAC class YlqF/YawG GTPase family. RsgA subfamily. In terms of assembly, monomer. Associates with 30S ribosomal subunit, binds 16S rRNA. It depends on Zn(2+) as a cofactor.

It is found in the cytoplasm. Functionally, one of several proteins that assist in the late maturation steps of the functional core of the 30S ribosomal subunit. Helps release RbfA from mature subunits. May play a role in the assembly of ribosomal proteins into the subunit. Circularly permuted GTPase that catalyzes slow GTP hydrolysis, GTPase activity is stimulated by the 30S ribosomal subunit. This is Small ribosomal subunit biogenesis GTPase RsgA from Aquifex aeolicus (strain VF5).